The following is a 519-amino-acid chain: MFWRKSMKKSAWGLVDAFFDKYDLVDHHIHSYNDFVSNRIQEIIDTSEPIELEQGKYRVETGKVSIEKPFIKEADGSKSKIYPTEARLRNLTYSAHMSLEMRLLKEGGPETEFEKVYIGELPVMLKSEICHLHGLSRKELMEKGEDPADPGGYFIVNGSERSIVTMEEIAPNKIILERIGEEDENRARAIVTSIRSGFRARISLEYRKPRKTGVFLRISFPYVPGEIPLVILLRALGLATDQEIITSISDDFNYQMIAADDIQVSLDRLNLNKKEMKELDEEDRREYLIRSAIKYIGNRVAKGMTEDYRIKRAEDVIDRYLLPHIGTEPEKRLEKATYLAEMTEMLLQVISGERRPHDKDHYTNKRLRVSGDLMEDLLRVAFTSLSRDMSYQLERSLARGKEPSVKQAVRSDVLTENLKHAIATGNWVGGRAGVSQLLDRTSYMGTLSHMRRVVSPLSRSQPHFEARDLHPTQFGKICPNETPEGPNCGLVKNLALLAKISEGSDASEVEEVIKMGVVN.

This sequence belongs to the RNA polymerase beta chain family. In terms of assembly, part of the RNA polymerase complex.

It is found in the cytoplasm. It catalyses the reaction RNA(n) + a ribonucleoside 5'-triphosphate = RNA(n+1) + diphosphate. Functionally, DNA-dependent RNA polymerase (RNAP) catalyzes the transcription of DNA into RNA using the four ribonucleoside triphosphates as substrates. The Rpo2 subunit (Rpo2N and Rpo2C in this organism) is implicated in DNA promoter recognition and in nucleotide binding. This Methanothermobacter thermautotrophicus (strain ATCC 29096 / DSM 1053 / JCM 10044 / NBRC 100330 / Delta H) (Methanobacterium thermoautotrophicum) protein is DNA-directed RNA polymerase subunit Rpo2N.